The following is a 312-amino-acid chain: Malate dehydrogenase (312 aa).

NAD(+) is bound by residues 7–13 (GAAGGIG) and D34. R81 and R87 together coordinate substrate. NAD(+) is bound by residues N94 and 117–119 (ITN). Residues N119 and R153 each contribute to the substrate site. H177 serves as the catalytic Proton acceptor. Position 227 (M227) interacts with NAD(+).

It belongs to the LDH/MDH superfamily. MDH type 1 family. As to quaternary structure, homodimer.

The enzyme catalyses (S)-malate + NAD(+) = oxaloacetate + NADH + H(+). In terms of biological role, catalyzes the reversible oxidation of malate to oxaloacetate. This Shigella flexneri serotype 5b (strain 8401) protein is Malate dehydrogenase.